Here is a 679-residue protein sequence, read N- to C-terminus: Stress-70 protein, mitochondrial (679 aa).

The transit peptide at 1 to 46 (MISASRAAAARLVGTTASRSPAAARHQDGWNGLSHEAFRFVSRRDY) directs the protein to the mitochondrion. The segment at 1–432 (MISASRAAAA…IQGGVLAGDV (432 aa)) is interaction with NFS1. Residues Thr-63 and Asn-64 each contribute to the ADP site. The segment at 63–431 (TNSCVAVMEG…AIQGGVLAGD (369 aa)) is nucleotide-binding domain (NBD). Position 76 is an N6-acetyllysine (Lys-76). Thr-87 is modified (phosphothreonine). Residues Lys-135 and Lys-138 each carry the N6-acetyllysine; alternate modification. An N6-succinyllysine; alternate mark is found at Lys-135 and Lys-138. Lys-143 is modified (N6-acetyllysine). The residue at position 206 (Lys-206) is an N6-acetyllysine; alternate. Lys-206 is modified (N6-succinyllysine; alternate). An N6-malonyllysine; alternate modification is found at Lys-206. 2 positions are modified to N6-acetyllysine: Lys-234 and Lys-288. Residue Lys-300 is modified to N6-acetyllysine; alternate. Lys-300 is modified (N6-succinyllysine; alternate). The ADP site is built by Glu-313, Lys-316, and Ser-320. Lys-360 bears the N6-acetyllysine; alternate mark. Position 360 is an N6-succinyllysine; alternate (Lys-360). An N6-succinyllysine modification is found at Lys-368. 2 residues coordinate ADP: Gly-388 and Arg-391. Lys-394 carries the post-translational modification N6-succinyllysine. Ser-408 bears the Phosphoserine mark. The interdomain linker stretch occupies residues 432-441 (VTDVLLLDVT). The interaction with FXN and ISCU stretch occupies residues 432–679 (VTDVLLLDVT…QKEDQKEEKQ (248 aa)). The interval 442–679 (PLSLGIETLG…QKEDQKEEKQ (238 aa)) is substrate-binding domain (SBD). Arg-513 is subject to Omega-N-methylarginine. N6-acetyllysine; alternate is present on residues Lys-567 and Lys-600. N6-succinyllysine; alternate is present on residues Lys-567 and Lys-600. Lys-610 bears the N6-succinyllysine mark. The residue at position 612 (Lys-612) is an N6-acetyllysine. At Lys-646 the chain carries N6-acetyllysine; alternate. Lys-646 is modified (N6-succinyllysine; alternate). Residues 655-679 (MASEREGSGSSSTGEQKEDQKEEKQ) form a disordered region. Over residues 669 to 679 (EQKEDQKEEKQ) the composition is skewed to basic and acidic residues.

It belongs to the heat shock protein 70 family. Interacts strongly with the intermediate form of FXN and weakly with its mature form. Interacts with HSCB. Associates with the mitochondrial contact site and cristae organizing system (MICOS) complex, composed of at least MICOS10/MIC10, CHCHD3/MIC19, CHCHD6/MIC25, APOOL/MIC27, IMMT/MIC60, APOO/MIC23/MIC26 and QIL1/MIC13. This complex was also known under the names MINOS or MitOS complex. The MICOS complex associates with mitochondrial outer membrane proteins SAMM50, MTX1, MTX2 and DNAJC11, mitochondrial inner membrane protein TMEM11 and with HSPA9. Interacts with DNLZ, the interaction is required to prevent self-aggregation. Interacts with TESPA1. Interacts with PDPN. Interacts with NFU1, NFS1 and ISCU. Interacts with TP53; the interaction promotes TP53 degradation. Interacts (via SBD domain) with UBXN2A; the interaction with UBXN2A inhibits HSPA9 interaction with and degradation of TP53, thereby promotes TP53 translocation to the nucleus. Interacts with ITPR1 AND VDAC1; this interaction couples ITPR1 to VDAC1. Component of the TIM23 mitochondrial inner membrane pre-sequence translocase complex.

It is found in the mitochondrion. Its subcellular location is the nucleus. The protein resides in the nucleolus. The protein localises to the cytoplasm. It localises to the mitochondrion matrix. It carries out the reaction ATP + H2O = ADP + phosphate + H(+). With respect to regulation, the chaperone activity is regulated by ATP-induced allosteric coupling of the nucleotide-binding (NBD) and substrate-binding (SBD) domains. ATP binding in the nucleotide-binding pocket (NBP) leads to a conformational change in the NBD, which is transferred through the interdomain linker (IDL) to the substrate-binding domain (SBD). This elicits a reduced substrate affinity and a faster substrate exchange rate. Upon hydrolysis of ATP to ADP, the protein undergoes a conformational change that increases its affinity for substrate proteins. It cycles through repeated phases of ATP hydrolysis and nucleotide exchange, facilitating repeated cycles of substrate binding and release. Functions in collaboration with co-chaperones. Functions with the co-chaperone, DNLZ, to maintain solubility and regulate ATP hydrolysis. Nucleotide exchange factors, GRPEL1 and GRPEL2, accelerate nucleotide exchange. Its function is as follows. Mitochondrial chaperone that plays a key role in mitochondrial protein import, folding, and assembly. Plays an essential role in the protein quality control system, the correct folding of proteins, the re-folding of misfolded proteins, and the targeting of proteins for subsequent degradation. These processes are achieved through cycles of ATP binding, ATP hydrolysis, and ADP release, mediated by co-chaperones. In mitochondria, it associates with the TIM (translocase of the inner membrane) protein complex to assist in the import and folding of mitochondrial proteins. Plays an important role in mitochondrial iron-sulfur cluster (ISC) biogenesis, interacts with and stabilizes ISC cluster assembly proteins FXN, NFU1, NFS1 and ISCU. Regulates erythropoiesis via stabilization of ISC assembly. Regulates mitochondrial calcium-dependent apoptosis by coupling two calcium channels, ITPR1 and VDAC1, at the mitochondria-associated endoplasmic reticulum (ER) membrane to facilitate calcium transport from the ER lumen to the mitochondria intermembrane space, providing calcium for the downstream calcium channel MCU, which releases it into the mitochondrial matrix. Although primarily located in the mitochondria, it is also found in other cellular compartments. In the cytosol, it associates with proteins involved in signaling, apoptosis, or senescence. It may play a role in cell cycle regulation via its interaction with and promotion of degradation of TP53. May play a role in the control of cell proliferation and cellular aging. Protects against reactive oxygen species (ROS). Extracellular HSPA9 plays a cytoprotective role by preventing cell lysis following immune attack by the membrane attack complex by disrupting formation of the complex. The protein is Stress-70 protein, mitochondrial of Rattus norvegicus (Rat).